The following is a 299-amino-acid chain: Acetylglutamate kinase (299 aa).

Substrate is bound by residues 72-73 (GG), R94, and N196.

It belongs to the acetylglutamate kinase family. ArgB subfamily.

Its subcellular location is the cytoplasm. It carries out the reaction N-acetyl-L-glutamate + ATP = N-acetyl-L-glutamyl 5-phosphate + ADP. It participates in amino-acid biosynthesis; L-arginine biosynthesis; N(2)-acetyl-L-ornithine from L-glutamate: step 2/4. Its function is as follows. Catalyzes the ATP-dependent phosphorylation of N-acetyl-L-glutamate. The protein is Acetylglutamate kinase of Burkholderia vietnamiensis (strain G4 / LMG 22486) (Burkholderia cepacia (strain R1808)).